Consider the following 399-residue polypeptide: Octopine dehydrogenase (399 aa).

NADH is bound by residues 10–13 (GGNG) and 35–38 (FADE). Residues Gln-118 and Thr-143 each contribute to the pyruvate site. Gln-118 is a binding site for substrate. Residue Cys-148 participates in NAD(+) binding. Met-206 lines the L-arginine pocket. His-212 contacts pyruvate. Residue His-212 is part of the active site. Residue Arg-324 coordinates NAD(+).

The protein belongs to the lysopine/nopaline/octopine/opine/vitopine dehydrogenases family.

It carries out the reaction D-octopine + NAD(+) + H2O = L-arginine + pyruvate + NADH + H(+). Agmatine acts as a competitive inhibitor of the condensation reaction where the L-arginine and agmatine substrates compete for the same site. Catalyzes the reverse reaction of octopine dehydrogenation. Acts on L-arginine in preference to other substrates such as canavanine, cysteine, L-alanine, ornithine or norvaline, owing to the presence of the positively charged guanidium group. The chain is Octopine dehydrogenase from Pecten maximus (King scallop).